Reading from the N-terminus, the 106-residue chain is Heat shock protein HspQ (106 aa).

The disordered stretch occupies residues 80 to 106; sequence DEHLDNDSMDELSQSIRNQLQAPRLRN. A compositionally biased stretch (polar residues) spans 90 to 100; the sequence is ELSQSIRNQLQ.

Belongs to the HspQ family.

It is found in the cytoplasm. Involved in the degradation of certain denaturated proteins, including DnaA, during heat shock stress. The sequence is that of Heat shock protein HspQ from Proteus mirabilis (strain HI4320).